The primary structure comprises 376 residues: N-acetyldiaminopimelate deacetylase (376 aa).

Residue D69 is part of the active site. E128 acts as the Proton acceptor in catalysis.

It belongs to the peptidase M20A family. N-acetyldiaminopimelate deacetylase subfamily.

The catalysed reaction is N-acetyl-(2S,6S)-2,6-diaminopimelate + H2O = (2S,6S)-2,6-diaminopimelate + acetate. The protein operates within amino-acid biosynthesis; L-lysine biosynthesis via DAP pathway; LL-2,6-diaminopimelate from (S)-tetrahydrodipicolinate (acetylase route): step 3/3. In terms of biological role, catalyzes the conversion of N-acetyl-diaminopimelate to diaminopimelate and acetate. This Bacillus cereus (strain ATCC 14579 / DSM 31 / CCUG 7414 / JCM 2152 / NBRC 15305 / NCIMB 9373 / NCTC 2599 / NRRL B-3711) protein is N-acetyldiaminopimelate deacetylase.